Consider the following 61-residue polypeptide: Alpha-conotoxin CnIJ (61 aa).

Residues 1-17 (MMFTVFLLVVLTTTVVS) form the signal peptide. The propeptide occupies 18-44 (FPSDSASDGRDDEAKDERSDMYELKRN). 2 disulfide bridges follow: C47–C52 and C48–C59. A Cysteine amide modification is found at C59.

The protein belongs to the conotoxin A superfamily. As to expression, expressed by the venom duct.

The protein localises to the secreted. The chain is Alpha-conotoxin CnIJ from Conus consors (Singed cone).